Here is a 448-residue protein sequence, read N- to C-terminus: Signal recognition particle 54 kDa protein (448 aa).

GTP-binding positions include 107–114 (GIQGSGKT), 189–193 (DSAGR), and 247–250 (TKLD).

Belongs to the GTP-binding SRP family. SRP54 subfamily. As to quaternary structure, part of the signal recognition particle protein translocation system, which is composed of SRP and FtsY. Archaeal SRP consists of a 7S RNA molecule of 300 nucleotides and two protein subunits: SRP54 and SRP19.

It is found in the cytoplasm. It catalyses the reaction GTP + H2O = GDP + phosphate + H(+). Involved in targeting and insertion of nascent membrane proteins into the cytoplasmic membrane. Binds to the hydrophobic signal sequence of the ribosome-nascent chain (RNC) as it emerges from the ribosomes. The SRP-RNC complex is then targeted to the cytoplasmic membrane where it interacts with the SRP receptor FtsY. This chain is Signal recognition particle 54 kDa protein, found in Thermococcus kodakarensis (strain ATCC BAA-918 / JCM 12380 / KOD1) (Pyrococcus kodakaraensis (strain KOD1)).